The following is an 861-amino-acid chain: MNVMENLEQHTPMMRQYLALKAENPDILLFYRMGDFYELFYDDAKKAAALLDISLTKRGQSAGQPIPMAGVPYHAVEGYLAKLVQLGESVAICEQIGDPALSKGPVERKIVRIVTPGTVSDENLLPERQDNLIVAVYQEKDKFGLATLDMTSGRFQISEPENAESLKAELQRLAPAELLYCEDFADMQLIEHYKGLRRRPIWEFELSTAVQLLNRQFGTKDLRGFGVEKAILGLCAAGCLLQYAKETQRTALPHIQSITLIQNNENIQLDAATRRNLELTQNLAGGTENTLASVLDKCVTPMGSRLLKRWIHQPIRHIQKLRQRQQIISEIIQLDLIGELQPYLQQVGDMERILARVALRTARPRDLTRLRTALEQIPTIKDILKNSPKFTALFQQIGDFDELFALLQQAIIDNPPLLIRDGGVIAEGYNAELDEWRALSDGATKYLEDLEIRERESTGIDTLKVGFNAVHGYYIQISQGQAHKAPIHYVRRQTLKNAERFIIPELKTYEDKVLKAKGASLALEKQLYDALFDRLLPHLGALQLASLTLSALDVLTNLAERAETLNYVAPDFSDEIGVKIENGRHPVVEQVLKEPFIANPVDLNQQRHLLIITGPNMGGKSTYMRQTALITLMAYIGSFVPAESALIGPIDRIFTRIGASDDLASGRSTFMVEMTEMANILHQAGANSLVLIDEIGRGTSTYDGLSLAWACAEWLAKKLRSLTLFATHYFELTVLPEQLAGTANVHLDALEHGDSIAFMHAVQDGAASKSYGLAVAALAGVPKNVVKLAKQKLANLEKLSQQSADQKLQDLRTINQNQGELNLMEEEDGKNAALEMLAQLDPDDLSPKQALAYLYQLKKLL.

An ATP-binding site is contributed by 614 to 621; that stretch reads GPNMGGKS.

It belongs to the DNA mismatch repair MutS family.

Functionally, this protein is involved in the repair of mismatches in DNA. It is possible that it carries out the mismatch recognition step. This protein has a weak ATPase activity. The sequence is that of DNA mismatch repair protein MutS from Mannheimia succiniciproducens (strain KCTC 0769BP / MBEL55E).